The primary structure comprises 714 residues: Protein ESC8 (714 aa).

2 disordered regions span residues 598–674 and 694–714; these read APTG…ELHN and RQLQDNSREKRSLRRNARKGL. A compositionally biased stretch (polar residues) spans 610–624; that stretch reads TSSQRRTTVHYSSDV. The segment covering 628-650 has biased composition (acidic residues); the sequence is VSEESENEVDIDVSDDYDSEYLS. Basic and acidic residues predominate over residues 654-674; sequence TLTRKGEDRTDKSFGKRELHN. Residues 704 to 714 show a composition bias toward basic residues; it reads RSLRRNARKGL.

Interacts with GAL11 and SIR2.

Its subcellular location is the cytoplasm. The protein localises to the nucleus. Involved in HMR and telomere silencing via the recruitment or stabilizing of the SIR (silent information regulators) complex. The polypeptide is Protein ESC8 (ESC8) (Saccharomyces cerevisiae (strain ATCC 204508 / S288c) (Baker's yeast)).